A 220-amino-acid polypeptide reads, in one-letter code: Small ribosomal subunit protein uS3c (220 aa).

A KH type-2 domain is found at 48–119 (VQKHTNNPFH…KLCLILIKID (72 aa)).

It belongs to the universal ribosomal protein uS3 family. In terms of assembly, part of the 30S ribosomal subunit.

It is found in the plastid. Its subcellular location is the chloroplast. The chain is Small ribosomal subunit protein uS3c (rps3) from Psilotum nudum (Whisk fern).